Reading from the N-terminus, the 219-residue chain is Probable 3-beta-hydroxysteroid-Delta(8),Delta(7)-isomerase (219 aa).

4 helical membrane passes run 29–49, 62–82, 119–139, and 181–201; these read ILVPYLATSLFLLLAVWLISG, LMCWWAFTGLTHIIIEGTFVF, VEGITAVLEGPASLLAVYAIA, and FWAYFIGANSSWVVIPTMIAI. The EXPERA domain occupies 58–200; it reads TDRWLMCWWA…SWVVIPTMIA (143 aa).

Belongs to the EBP family.

It localises to the endoplasmic reticulum membrane. The catalysed reaction is lathosterol = 5alpha-cholest-8-en-3beta-ol. The protein operates within steroid biosynthesis; sterol biosynthesis. Catalyzes the conversion of Delta(8)-sterols to their corresponding Delta(7)-isomers. This Oryza sativa subsp. japonica (Rice) protein is Probable 3-beta-hydroxysteroid-Delta(8),Delta(7)-isomerase.